Here is a 463-residue protein sequence, read N- to C-terminus: D(2)-like dopamine receptor (463 aa).

At methionine 1–tyrosine 35 the chain is on the extracellular side. N-linked (GlcNAc...) asparagine glycosylation is found at asparagine 10, asparagine 16, and asparagine 22. A helical transmembrane segment spans residues alanine 36–serine 58. Residues arginine 59–asparagine 68 are Cytoplasmic-facing. A helical membrane pass occupies residues tyrosine 69 to tyrosine 91. Residues leucine 92–aspartate 106 are Extracellular-facing. The cysteines at positions 105 and 183 are disulfide-linked. A helical transmembrane segment spans residues isoleucine 107–isoleucine 128. Topologically, residues aspartate 129–arginine 149 are cytoplasmic. Residues valine 150–phenylalanine 170 traverse the membrane as a helical segment. Topologically, residues glycine 171–alanine 189 are extracellular. A helical transmembrane segment spans residues phenylalanine 190–tyrosine 214. The Cytoplasmic portion of the chain corresponds to valine 215–glutamine 392. The disordered stretch occupies residues cysteine 295–valine 362. Over residues proline 315–alanine 329 the composition is skewed to polar residues. A compositionally biased stretch (basic and acidic residues) spans glutamate 341–lysine 353. The chain crosses the membrane as a helical span at residues methionine 393 to leucine 414. Topologically, residues asparagine 415–asparagine 429 are extracellular. Cysteine 418 and cysteine 421 form a disulfide bridge. The helical transmembrane segment at alanine 430–valine 451 threads the bilayer. Residues glutamate 452–cysteine 463 lie on the Cytoplasmic side of the membrane.

It belongs to the G-protein coupled receptor 1 family.

It is found in the cell membrane. Its function is as follows. Receptor for dopamine. The chain is D(2)-like dopamine receptor (d215) from Takifugu rubripes (Japanese pufferfish).